Here is a 347-residue protein sequence, read N- to C-terminus: Isopentenyl-diphosphate delta-isomerase (347 aa).

A substrate-binding site is contributed by Arg5–Lys6. FMN is bound by residues Ser61, Ser62–Thr64, Ser92, and Asn120. Residue Ser92–Arg94 participates in substrate binding. Gln159 contacts substrate. Residue Glu160 coordinates Mg(2+). FMN contacts are provided by residues Lys189, Ser214, Thr219, Gly269–Arg271, and Ala290–Arg291.

The protein belongs to the IPP isomerase type 2 family. As to quaternary structure, homooctamer. Dimer of tetramers. FMN serves as cofactor. The cofactor is NADPH. Mg(2+) is required as a cofactor.

Its subcellular location is the cytoplasm. The enzyme catalyses isopentenyl diphosphate = dimethylallyl diphosphate. Its function is as follows. Involved in the biosynthesis of isoprenoids. Catalyzes the 1,3-allylic rearrangement of the homoallylic substrate isopentenyl (IPP) to its allylic isomer, dimethylallyl diphosphate (DMAPP). The protein is Isopentenyl-diphosphate delta-isomerase of Thermoplasma volcanium (strain ATCC 51530 / DSM 4299 / JCM 9571 / NBRC 15438 / GSS1).